Reading from the N-terminus, the 1040-residue chain is Putative protein tag-76 (1040 aa).

The span at 1–15 (MSRRNATSFVDNNTL) shows a compositional bias: polar residues. Disordered stretches follow at residues 1–61 (MSRR…GSVS) and 322–367 (RTSK…PGAN). Over residues 16–32 (TSSGISGSGSMSPPITS) the composition is skewed to low complexity. The segment covering 33–50 (RPASGQASPLTSNGSLSP) has biased composition (polar residues). The span at 333 to 356 (GPGGPGGPGGYRGGRGGGRGGSYG) shows a compositional bias: gly residues. One can recognise a PAZ domain in the interval 379–486 (FTMDTLSRDT…LPMEHCLIDS (108 aa)). Residues 660–966 (CIIVVLQSKN…VATRARCHVK (307 aa)) form the Piwi domain.

This is Putative protein tag-76 (tag-76) from Caenorhabditis elegans.